Consider the following 339-residue polypeptide: Phenylalanine--tRNA ligase alpha subunit (339 aa).

Glu-254 contributes to the Mg(2+) binding site.

It belongs to the class-II aminoacyl-tRNA synthetase family. Phe-tRNA synthetase alpha subunit type 1 subfamily. Tetramer of two alpha and two beta subunits. It depends on Mg(2+) as a cofactor.

It localises to the cytoplasm. The catalysed reaction is tRNA(Phe) + L-phenylalanine + ATP = L-phenylalanyl-tRNA(Phe) + AMP + diphosphate + H(+). The sequence is that of Phenylalanine--tRNA ligase alpha subunit from Caldanaerobacter subterraneus subsp. tengcongensis (strain DSM 15242 / JCM 11007 / NBRC 100824 / MB4) (Thermoanaerobacter tengcongensis).